The chain runs to 387 residues: Putative glutamate--cysteine ligase 2 (387 aa).

It belongs to the glutamate--cysteine ligase type 2 family. YbdK subfamily.

It catalyses the reaction L-cysteine + L-glutamate + ATP = gamma-L-glutamyl-L-cysteine + ADP + phosphate + H(+). Its function is as follows. ATP-dependent carboxylate-amine ligase which exhibits weak glutamate--cysteine ligase activity. The protein is Putative glutamate--cysteine ligase 2 of Trichormus variabilis (strain ATCC 29413 / PCC 7937) (Anabaena variabilis).